The sequence spans 98 residues: Co-chaperonin GroES (98 aa).

It belongs to the GroES chaperonin family. In terms of assembly, heptamer of 7 subunits arranged in a ring. Interacts with the chaperonin GroEL.

It is found in the cytoplasm. In terms of biological role, together with the chaperonin GroEL, plays an essential role in assisting protein folding. The GroEL-GroES system forms a nano-cage that allows encapsulation of the non-native substrate proteins and provides a physical environment optimized to promote and accelerate protein folding. GroES binds to the apical surface of the GroEL ring, thereby capping the opening of the GroEL channel. In Renibacterium salmoninarum (strain ATCC 33209 / DSM 20767 / JCM 11484 / NBRC 15589 / NCIMB 2235), this protein is Co-chaperonin GroES.